The sequence spans 521 residues: Importin subunit alpha-4 (521 aa).

Positions 1–29 are disordered; that stretch reads MAENPGLENHRIKSFKNKGRDVETMRRHR. Ala-2 is subject to N-acetylalanine. The IBB domain occupies 2–58; it reads AENPGLENHRIKSFKNKGRDVETMRRHRNEVTVELRKNKRDEHLLKKRNVPQEESLE. Positions 18 to 29 are enriched in basic and acidic residues; that stretch reads KGRDVETMRRHR. A Nuclear localization signal motif is present at residues 43-52; sequence EHLLKKRNVP. Phosphoserine occurs at positions 56 and 60. The stretch at 66–106 is one ARM 1; truncated repeat; that stretch reads FKAQNVTLEAILQNATSDNPVVQLSAVQAARKLLSSDRNPP. ARM repeat units lie at residues 107–149, 150–194, 195–233, 234–278, 279–318, 319–360, 361–400, and 401–443; these read IDDL…TSAQ, TQAV…CRDY, VISL…NKDP, PPPM…EQIQ, MVID…TDEQ, TQVV…NQQQ, VQAV…ISGR, and KDQV…IMAG. Positions 137–229 are NLS binding site (major); it reads WALTNIASGT…VTWVIVNLCR (93 aa). The NLS binding site (minor) stretch occupies residues 306 to 394; that stretch reads RAVGNIVTGT…QKEAAWAISN (89 aa). One copy of the ARM 10; atypical repeat lies at 447-485; it reads STIAEIIEECGGLEKIEVLQQHENEDIYKLAFEIIDQYF. The residue at position 484 (Tyr-484) is a Phosphotyrosine.

Belongs to the importin alpha family. As to quaternary structure, forms a complex with importin subunit beta-1. Interacts with DDX21. Interacts with NCBP1, NCBP2/CBP20 and NCBP3. Interacts with RCC1. Interacts with ZC3H11A. In terms of tissue distribution, detected more or less in all tissues examined (Ehrlich ascites tumor cells, testis, kidney, spleen, liver, heart, lung, thymus, skeletal muscle, cerebellum and brain (without cerebellum)).

It localises to the cytoplasm. It is found in the nucleus. Functionally, functions in nuclear protein import as an adapter protein for nuclear receptor KPNB1. Binds specifically and directly to substrates containing either a simple or bipartite NLS motif. Docking of the importin/substrate complex to the nuclear pore complex (NPC) is mediated by KPNB1 through binding to nucleoporin FxFG repeats and the complex is subsequently translocated through the pore by an energy requiring, Ran-dependent mechanism. At the nucleoplasmic side of the NPC, Ran binds to importin-beta and the three components separate and importin-alpha and -beta are re-exported from the nucleus to the cytoplasm where GTP hydrolysis releases Ran from importin. The directionality of nuclear import is thought to be conferred by an asymmetric distribution of the GTP- and GDP-bound forms of Ran between the cytoplasm and nucleus. In vitro, mediates the nuclear import of human cytomegalovirus UL84 by recognizing a non-classical NLS. The chain is Importin subunit alpha-4 (Kpna3) from Mus musculus (Mouse).